Reading from the N-terminus, the 347-residue chain is Palmitoyltransferase ZDHHC19 (347 aa).

The next 2 helical transmembrane spans lie at valine 29–proline 49 and tryptophan 59–leucine 79. The region spanning glutamate 112–leucine 162 is the DHHC domain. Cysteine 142 serves as the catalytic S-palmitoyl cysteine intermediate. Transmembrane regions (helical) follow at residues leucine 156–leucine 176 and alanine 194–isoleucine 214. The tract at residues isoleucine 275–proline 347 is disordered.

It belongs to the DHHC palmitoyltransferase family.

It localises to the golgi apparatus membrane. The protein localises to the cytoplasm. The protein resides in the perinuclear region. The catalysed reaction is L-cysteinyl-[protein] + hexadecanoyl-CoA = S-hexadecanoyl-L-cysteinyl-[protein] + CoA. Palmitoyltransferase that mediates palmitoylation oproteins, such as RRAS and SQSTM1. Catalyzes palmitoylation of RRAS, leading to increased cell viability. Acts as a positive regulator of autophagy by mediating palmitoylation of SQSTM1, promoting affinity between SQSTM1 and ATG8 proteins and recruitment of ubiquitinated cargo proteins to autophagosomes. The sequence is that of Palmitoyltransferase ZDHHC19 (Zdhhc19) from Mus musculus (Mouse).